Here is a 727-residue protein sequence, read N- to C-terminus: 1,4-alpha-glucan branching enzyme GlgB (727 aa).

Aspartate 405 acts as the Nucleophile in catalysis. The Proton donor role is filled by glutamate 458.

The protein belongs to the glycosyl hydrolase 13 family. GlgB subfamily. In terms of assembly, monomer.

The enzyme catalyses Transfers a segment of a (1-&gt;4)-alpha-D-glucan chain to a primary hydroxy group in a similar glucan chain.. Its pathway is glycan biosynthesis; glycogen biosynthesis. Its function is as follows. Catalyzes the formation of the alpha-1,6-glucosidic linkages in glycogen by scission of a 1,4-alpha-linked oligosaccharide from growing alpha-1,4-glucan chains and the subsequent attachment of the oligosaccharide to the alpha-1,6 position. This Yersinia enterocolitica serotype O:8 / biotype 1B (strain NCTC 13174 / 8081) protein is 1,4-alpha-glucan branching enzyme GlgB.